We begin with the raw amino-acid sequence, 249 residues long: MYRLATRRVLAQTTQTFSKRTFSNQGFRAAKASKTNMYLGAGIALIPVIMSINYLNGNHIANEVDENKVEEGKKKAESTGKKEFVEKAEKEAIGKADVKTKVPAEEANPETRTETDKPSEESQKDEENSYEGAAYNPETGEINWDCPCLGGMAHGPCGEEFKEAFACFIYSESEPKGIECIKKFESMRNCFREHPEHYKEELYDDEEQEPLVDVNEKKGDASEQSAETIADDATKVVKEKAKAEDSNTK.

Residues 1–22 (MYRLATRRVLAQTTQTFSKRTF) constitute a mitochondrion transit peptide. The Mitochondrial matrix segment spans residues 23–36 (SNQGFRAAKASKTN). A helical; Signal-anchor for type II membrane protein transmembrane segment spans residues 37 to 55 (MYLGAGIALIPVIMSINYL). The Mitochondrial intermembrane segment spans residues 56–249 (NGNHIANEVD…KAKAEDSNTK (194 aa)). Positions 95 to 127 (KADVKTKVPAEEANPETRTETDKPSEESQKDEE) are enriched in basic and acidic residues. The segment at 95–136 (KADVKTKVPAEEANPETRTETDKPSEESQKDEENSYEGAAYN) is disordered. 3 cysteine pairs are disulfide-bonded: Cys146–Cys148, Cys157–Cys190, and Cys167–Cys180. Residues 154-198 (HGPCGEEFKEAFACFIYSESEPKGIECIKKFESMRNCFREHPEHY) form the CHCH domain. Short sequence motifs (cx9C motif) lie at residues 157-167 (CGEEFKEAFAC) and 180-190 (CIKKFESMRNC). The disordered stretch occupies residues 202 to 249 (LYDDEEQEPLVDVNEKKGDASEQSAETIADDATKVVKEKAKAEDSNTK). The segment covering 232–249 (DATKVVKEKAKAEDSNTK) has biased composition (basic and acidic residues).

As to quaternary structure, monomer. Cu(2+) is required as a cofactor. Zn(2+) serves as cofactor.

It is found in the mitochondrion inner membrane. Functionally, required for the import and folding of small cysteine-containing proteins (small Tim) in the mitochondrial intermembrane space (IMS). Forms a redox cycle with ERV1 that involves a disulfide relay system. Precursor proteins to be imported into the IMS are translocated in their reduced form into the mitochondria. The oxidized form of MIA40 forms a transient intermolecular disulfide bridge with the reduced precursor protein, resulting in oxidation of the precursor protein that now contains an intramolecular disulfide bond and is able to undergo folding in the IMS. This chain is Mitochondrial intermembrane space import and assembly protein 40 (MIA40), found in Debaryomyces hansenii (strain ATCC 36239 / CBS 767 / BCRC 21394 / JCM 1990 / NBRC 0083 / IGC 2968) (Yeast).